The following is a 435-amino-acid chain: Gamma-glutamyl phosphate reductase (435 aa).

The protein belongs to the gamma-glutamyl phosphate reductase family.

The protein localises to the cytoplasm. The catalysed reaction is L-glutamate 5-semialdehyde + phosphate + NADP(+) = L-glutamyl 5-phosphate + NADPH + H(+). It participates in amino-acid biosynthesis; L-proline biosynthesis; L-glutamate 5-semialdehyde from L-glutamate: step 2/2. Catalyzes the NADPH-dependent reduction of L-glutamate 5-phosphate into L-glutamate 5-semialdehyde and phosphate. The product spontaneously undergoes cyclization to form 1-pyrroline-5-carboxylate. The protein is Gamma-glutamyl phosphate reductase of Bradyrhizobium diazoefficiens (strain JCM 10833 / BCRC 13528 / IAM 13628 / NBRC 14792 / USDA 110).